Here is a 326-residue protein sequence, read N- to C-terminus: Protein LEG1 homolog (326 aa).

An N-terminal signal peptide occupies residues 1-22 (MKSNKTIFLILLFLINFNSIYS). N-linked (GlcNAc...) asparagine glycosylation is found at Asn58, Asn85, Asn165, Asn226, and Asn245.

The protein belongs to the LEG1 family.

It is found in the secreted. In Dictyostelium discoideum (Social amoeba), this protein is Protein LEG1 homolog.